Reading from the N-terminus, the 385-residue chain is Type III polyketide synthase C (385 aa).

Residue 56–63 participates in CoA binding; the sequence is KLQHLCKS. Residue Cys-165 is the Nucleophile of the active site. Position 217-218 (217-218) interacts with substrate; sequence GD. Residues Leu-267, 307-310, and Ala-310 each bind CoA; that span reads GGPA.

The protein belongs to the thiolase-like superfamily. Chalcone/stilbene synthases family. As to quaternary structure, homodimer.

Its subcellular location is the endoplasmic reticulum. It participates in secondary metabolite biosynthesis; flavonoid biosynthesis. Its function is as follows. Plant type III polyketide synthases (PKSs) that catalyzes the condensation of malonyl-CoA units with various CoA ester starter molecules to generate a diverse array of natural products including long-chain alkyl alpha-pyrones. In Arabidopsis thaliana (Mouse-ear cress), this protein is Type III polyketide synthase C.